A 156-amino-acid chain; its full sequence is MSRRTRAQKRPTAPDPVYNNVLVNMLIQRVMRNGKKSLASRIVYEAMKTVQERTGEDALQIFERAVKNATPLVEVKARRVGGATYQVPMEVRPDRGISLALRWLVQFSRKRAGRSMSAKLANELMDAANETGSTIRKREETHKMAEANKAFAHYRY.

Belongs to the universal ribosomal protein uS7 family. In terms of assembly, part of the 30S ribosomal subunit. Contacts proteins S9 and S11.

Its function is as follows. One of the primary rRNA binding proteins, it binds directly to 16S rRNA where it nucleates assembly of the head domain of the 30S subunit. Is located at the subunit interface close to the decoding center, probably blocks exit of the E-site tRNA. The polypeptide is Small ribosomal subunit protein uS7 (Thermosynechococcus vestitus (strain NIES-2133 / IAM M-273 / BP-1)).